Consider the following 476-residue polypeptide: Glycogen synthase (476 aa).

K15 contributes to the ADP-alpha-D-glucose binding site.

The protein belongs to the glycosyltransferase 1 family. Bacterial/plant glycogen synthase subfamily.

The enzyme catalyses [(1-&gt;4)-alpha-D-glucosyl](n) + ADP-alpha-D-glucose = [(1-&gt;4)-alpha-D-glucosyl](n+1) + ADP + H(+). It participates in glycan biosynthesis; glycogen biosynthesis. In terms of biological role, synthesizes alpha-1,4-glucan chains using ADP-glucose. In Haemophilus influenzae (strain ATCC 51907 / DSM 11121 / KW20 / Rd), this protein is Glycogen synthase (glgA).